We begin with the raw amino-acid sequence, 2603 residues long: Squalestatin tetraketide synthase (2603 aa).

In terms of domain architecture, Ketosynthase family 3 (KS3) spans 29–455 (TIPIAIIGMS…GANAHVILES (427 aa)). Catalysis depends on for beta-ketoacyl synthase activity residues cysteine 202, histidine 337, and histidine 377. The segment at 463-512 (IANGSGRSNGTGNGHNGANGTTNGHNGTNGTTNGHFDATQATNGHYGTDE) is disordered. The segment covering 469 to 479 (RSNGTGNGHNG) has biased composition (gly residues). Positions 480–497 (ANGTTNGHNGTNGTTNGH) are enriched in low complexity. Residues 608–931 (VFTGQGAQWF…PYISCLLRGQ (324 aa)) are malonyl-CoA:ACP transacylase (MAT) domain. The interval 1000–1138 (HDLLGSLIVG…GRITIEFDTS (139 aa)) is N-terminal hotdog fold. In terms of domain architecture, PKS/mFAS DH spans 1000–1314 (HDLLGSLIVG…NQSVGQMAPQ (315 aa)). Residues 1000–1314 (HDLLGSLIVG…NQSVGQMAPQ (315 aa)) form a dehydratase (DH) domain region. Histidine 1032 acts as the Proton acceptor; for dehydratase activity in catalysis. The interval 1157–1314 (LMRSVDPSNL…NQSVGQMAPQ (158 aa)) is C-terminal hotdog fold. Catalysis depends on aspartate 1223, which acts as the Proton donor; for dehydratase activity. The segment at 1465-1665 (LYRYYTDAIK…GLDIELRDCD (201 aa)) is methyltransferase (CMet) domain. The interval 1892–2205 (GLIDTLQFSK…AGKHMGKIVI (314 aa)) is enoyl reductase (ER) (ER) domain. The segment at 2228–2406 (ASYLIVGGLG…AVSIDLGMVQ (179 aa)) is ketoreductase (KR) domain. The Carrier domain maps to 2516–2593 (EAIDVVGRAI…ALATTVATKS (78 aa)). The residue at position 2553 (serine 2553) is an O-(pantetheine 4'-phosphoryl)serine.

It functions in the pathway secondary metabolite biosynthesis. Its function is as follows. Highly reducing polyketide synthase (HR-PKS); part of the gene cluster that mediates the biosynthesis of squalestatin S1 (SQS1, also known as zaragozic acid A), a lead compound for the treatment of hyper-cholesterolemia by targeting squalene synthase (SS). Pks1 is responsible for the biosynthesis of the tetraketide sidechain of SQS1. The biosynthesis must involve 3 rounds of chain extension. After the first and second rounds methyl-transfer occurs, and in all rounds of extension the ketoreductase and dehydratase are active. The enoyl reductase and C-MeT are not active in the final round of extension. The chain is Squalestatin tetraketide synthase from Phoma sp. (strain C2932).